We begin with the raw amino-acid sequence, 117 residues long: Immunoglobulin heavy variable 4-38-2 (117 aa).

An N-terminal signal peptide occupies residues methionine 1–serine 19. Residues glutamine 20 to serine 44 are framework-1. Residues glutamine 20–arginine 117 form the Ig-like domain. A disulfide bridge connects residues cysteine 41 and cysteine 115. The segment at glycine 45–tyrosine 53 is complementarity-determining-1. The segment at tryptophan 54–serine 70 is framework-2. Residues isoleucine 71–threonine 77 form a complementarity-determining-2 region. Positions tyrosine 78–cysteine 115 are framework-3. Residues alanine 116–arginine 117 form a complementarity-determining-3 region.

In terms of assembly, immunoglobulins are composed of two identical heavy chains and two identical light chains; disulfide-linked.

The protein resides in the secreted. It is found in the cell membrane. V region of the variable domain of immunoglobulin heavy chains that participates in the antigen recognition. Immunoglobulins, also known as antibodies, are membrane-bound or secreted glycoproteins produced by B lymphocytes. In the recognition phase of humoral immunity, the membrane-bound immunoglobulins serve as receptors which, upon binding of a specific antigen, trigger the clonal expansion and differentiation of B lymphocytes into immunoglobulins-secreting plasma cells. Secreted immunoglobulins mediate the effector phase of humoral immunity, which results in the elimination of bound antigens. The antigen binding site is formed by the variable domain of one heavy chain, together with that of its associated light chain. Thus, each immunoglobulin has two antigen binding sites with remarkable affinity for a particular antigen. The variable domains are assembled by a process called V-(D)-J rearrangement and can then be subjected to somatic hypermutations which, after exposure to antigen and selection, allow affinity maturation for a particular antigen. In Homo sapiens (Human), this protein is Immunoglobulin heavy variable 4-38-2.